A 232-amino-acid polypeptide reads, in one-letter code: MHIAEGFLPPAHAIAWGVASAPFVVHGVRSLTREVREHPESTLLLGASGAFTFVLSALKLPSVTGSCSHPTGTGLGAILFRPPIMAVLGTITLLFQALLLAHGGLTTLGANVFSMAIVGPWAGYGVYRLLRRWDVPLMVTVFFGAFVADLSTYCVTSVQLALAFPDPSSGFLGALGKFGSIFAVTQIPLAVSEGLLTVIVMRLLVQSSKGELTRLGVLLTRTGERKQEAVAR.

6 helical membrane-spanning segments follow: residues 6 to 26, 43 to 63, 84 to 104, 107 to 127, 135 to 155, and 181 to 201; these read GFLP…FVVH, LLLG…LPSV, IMAV…AHGG, TLGA…YGVY, VPLM…TYCV, and IFAV…VIVM.

It belongs to the CbiM family. In terms of assembly, forms an energy-coupling factor (ECF) transporter complex composed of an ATP-binding protein (A component, CbiO), a transmembrane protein (T component, CbiQ) and 2 possible substrate-capture proteins (S components, CbiM and CbiN) of unknown stoichimetry.

The protein resides in the cell membrane. It functions in the pathway cofactor biosynthesis; adenosylcobalamin biosynthesis. Functionally, part of the energy-coupling factor (ECF) transporter complex CbiMNOQ involved in cobalt import. This is Cobalt transport protein CbiM from Streptomyces coelicolor (strain ATCC BAA-471 / A3(2) / M145).